A 248-amino-acid polypeptide reads, in one-letter code: Probable transcriptional regulatory protein BT_2363 (248 aa).

The protein belongs to the TACO1 family.

It is found in the cytoplasm. The sequence is that of Probable transcriptional regulatory protein BT_2363 from Bartonella tribocorum (strain CIP 105476 / IBS 506).